The chain runs to 257 residues: AN1-type zinc finger protein 2B (257 aa).

AN1-type zinc fingers lie at residues Pro-4 to Ile-52 and Lys-94 to Ser-142. 16 residues coordinate Zn(2+): Cys-10, Cys-15, Cys-25, Cys-28, Cys-33, His-36, His-42, Cys-44, Cys-100, Cys-105, Cys-115, Cys-118, Cys-123, His-126, His-132, and Cys-134. The VCP/p97-interacting motif (VIM) stretch occupies residues Thr-141 to Arg-151. Residues Gln-153–Ser-187 form a disordered region. The span at Ala-156–Pro-179 shows a compositional bias: low complexity. Phosphoserine is present on residues Ser-163, Ser-173, and Ser-187. UIM domains are found at residues Ser-197–Gln-216 and Gln-221–Gln-240. Cys-254 carries the cysteine methyl ester modification. Cys-254 carries the S-geranylgeranyl cysteine lipid modification. Residues Cys-254 to Cys-257 carry the CAAX motif motif. Positions Ser-255 to Cys-257 are cleaved as a propeptide — removed in mature form.

Binds 'Lys-48'-linked polyubiquitin chains of ubiquitinated proteins. Associates with the proteasome complex; upon exposure to arsenite. Interacts (via VIM motif) with VCP; the interaction is direct. Interacts with BAG6. Interacts with IGF1R (nascent precursor form). Interacts with DERL1, FAF2, NPLOC4 and UFD1; probably through VCP. Post-translationally, phosphorylated by MAPK14. Phosphorylation has no effect on association with the proteasome complex.

It localises to the endoplasmic reticulum membrane. Plays a role in protein homeostasis by regulating both the translocation and the ubiquitin-mediated proteasomal degradation of nascent proteins at the endoplasmic reticulum. It is involved in the regulation of signal-mediated translocation of proteins into the endoplasmic reticulum. It also plays a role in the ubiquitin-mediated proteasomal degradation of proteins for which signal-mediated translocation to the endoplasmic reticulum has failed. May therefore function in the endoplasmic reticulum stress-induced pre-emptive quality control, a mechanism that selectively attenuates the translocation of newly synthesized proteins into the endoplasmic reticulum and reroutes them to the cytosol for proteasomal degradation. By controlling the steady-state expression of the IGF1R receptor, indirectly regulates the insulin-like growth factor receptor signaling pathway. The protein is AN1-type zinc finger protein 2B of Rattus norvegicus (Rat).